The chain runs to 452 residues: Pup--protein ligase (452 aa).

Residue E9 coordinates Mg(2+). Position 53 (R53) interacts with ATP. Residue Y55 coordinates Mg(2+). The Proton acceptor role is filled by D57. E63 contributes to the Mg(2+) binding site. Residues T66 and W419 each coordinate ATP.

The protein belongs to the Pup ligase/Pup deamidase family. Pup-conjugating enzyme subfamily. Pupylated at an undetermined lysine residue by the prokaryotic ubiquitin-like protein Pup, which leads to its degradation by the proteasome and thereby constitutes a negative auto-regulation.

It carries out the reaction ATP + [prokaryotic ubiquitin-like protein]-L-glutamate + [protein]-L-lysine = ADP + phosphate + N(6)-([prokaryotic ubiquitin-like protein]-gamma-L-glutamyl)-[protein]-L-lysine.. The protein operates within protein degradation; proteasomal Pup-dependent pathway. It functions in the pathway protein modification; protein pupylation. In terms of biological role, catalyzes the covalent attachment of the prokaryotic ubiquitin-like protein modifier Pup to the proteasomal substrate proteins, thereby targeting them for proteasomal degradation. This tagging system is termed pupylation. The ligation reaction likely involves the side-chain carboxylate of the C-terminal glutamate of Pup and the side-chain amino group of a substrate lysine. This chain is Pup--protein ligase (pafA), found in Mycolicibacterium smegmatis (strain ATCC 700084 / mc(2)155) (Mycobacterium smegmatis).